Here is a 180-residue protein sequence, read N- to C-terminus: Ribosome-recycling factor (180 aa).

The segment at 135-156 (SDLKKDNDLSEDSRHRTEDDIQ) is disordered.

Belongs to the RRF family.

It localises to the cytoplasm. Its function is as follows. Responsible for the release of ribosomes from messenger RNA at the termination of protein biosynthesis. May increase the efficiency of translation by recycling ribosomes from one round of translation to another. The sequence is that of Ribosome-recycling factor from Oenococcus oeni (strain ATCC BAA-331 / PSU-1).